Reading from the N-terminus, the 679-residue chain is Palmitoyltransferase ERF2 (679 aa).

3 disordered regions span residues methionine 1–arginine 181, arginine 194–aspartate 250, and leucine 267–serine 338. Residues methionine 1 to asparagine 368 lie on the Cytoplasmic side of the membrane. Composition is skewed to polar residues over residues valine 44–methionine 57 and threonine 66–asparagine 82. Composition is skewed to low complexity over residues serine 103–serine 114 and proline 143–proline 167. The span at asparagine 291–threonine 301 shows a compositional bias: polar residues. Residues isoleucine 369 to tryptophan 389 traverse the membrane as a helical segment. Residues leucine 390 to asparagine 393 are Lumenal-facing. A helical transmembrane segment spans residues valine 394 to isoleucine 414. At histidine 415–arginine 511 the chain is on the cytoplasmic side. The DHHC domain maps to lysine 468–threonine 518. Catalysis depends on cysteine 498, which acts as the S-palmitoyl cysteine intermediate. The chain crosses the membrane as a helical span at residues tyrosine 512 to leucine 532. Residues threonine 533–arginine 554 are Lumenal-facing. The helical transmembrane segment at valine 555–glycine 575 threads the bilayer. At tyrosine 576–histidine 679 the chain is on the cytoplasmic side. A disordered region spans residues leucine 640–histidine 679.

It belongs to the DHHC palmitoyltransferase family. ERF2/ZDHHC9 subfamily. Post-translationally, autopalmitoylated.

Its subcellular location is the endoplasmic reticulum membrane. The enzyme catalyses L-cysteinyl-[protein] + hexadecanoyl-CoA = S-hexadecanoyl-L-cysteinyl-[protein] + CoA. Functionally, palmitoyltransferase specific for Ras proteins. The polypeptide is Palmitoyltransferase ERF2 (ERF2) (Gibberella zeae (strain ATCC MYA-4620 / CBS 123657 / FGSC 9075 / NRRL 31084 / PH-1) (Wheat head blight fungus)).